The primary structure comprises 198 residues: Recombination protein RecR (198 aa).

The segment at 57–72 adopts a C4-type zinc-finger fold; sequence CSVCGHITDQDPCYIC. The 96-residue stretch at 80–175 folds into the Toprim domain; it reads SVICVVQDPK…KLSRIAHGLP (96 aa).

This sequence belongs to the RecR family.

Functionally, may play a role in DNA repair. It seems to be involved in an RecBC-independent recombinational process of DNA repair. It may act with RecF and RecO. The polypeptide is Recombination protein RecR (Bacillus pumilus (strain SAFR-032)).